The sequence spans 338 residues: MRVLGIETSCDETGIAVYDDKLGLLSHALYSQVKLHADYGGVVPELASRDHVRKIVPLIRQALKNADTKIADLDGIAYTKGPGLIGALLVGACVGRSLAFAWNKPAIGVHHMEGHLLAPMLEEDAPEFPFVALLVSGGHSMLVKVDGIGLYEVLGESVDDAAGEAFDKTAKLMGLDYPGGPRLAKLAATGVPAGYQFPRPMTDRPGLDFSFSGLKTFTANTIAAEPDDEQTRANIARAFEEAVVDTLAIKCRRALKLTGYNRLVIAGGVSANTRLRATLAEVMTSIGGKVYYPRGEFCTDNGAMIAYAGLQRLKAGQREDLAVKGQPRWPLDTLPPLF.

Residues His111 and His115 each coordinate Fe cation. Residues 134–138 (LVSGG), Asp167, Gly180, and Asn272 each bind substrate. Asp300 lines the Fe cation pocket.

Belongs to the KAE1 / TsaD family. Fe(2+) serves as cofactor.

The protein resides in the cytoplasm. The enzyme catalyses L-threonylcarbamoyladenylate + adenosine(37) in tRNA = N(6)-L-threonylcarbamoyladenosine(37) in tRNA + AMP + H(+). Its function is as follows. Required for the formation of a threonylcarbamoyl group on adenosine at position 37 (t(6)A37) in tRNAs that read codons beginning with adenine. Is involved in the transfer of the threonylcarbamoyl moiety of threonylcarbamoyl-AMP (TC-AMP) to the N6 group of A37, together with TsaE and TsaB. TsaD likely plays a direct catalytic role in this reaction. This chain is tRNA N6-adenosine threonylcarbamoyltransferase, found in Shewanella putrefaciens (strain CN-32 / ATCC BAA-453).